Consider the following 273-residue polypeptide: Mediator of RNA polymerase II transcription subunit 18 (273 aa).

The segment covering 90-106 has biased composition (low complexity); sequence GAQSSAASSGDPDAPMS. The segment at 90–114 is disordered; that stretch reads GAQSSAASSGDPDAPMSGTDTGTNF.

The protein belongs to the Mediator complex subunit 18 family. In terms of assembly, component of the Mediator complex.

The protein localises to the nucleus. Its function is as follows. Component of the Mediator complex, a coactivator involved in the regulated transcription of nearly all RNA polymerase II-dependent genes. Mediator functions as a bridge to convey information from gene-specific regulatory proteins to the basal RNA polymerase II transcription machinery. Mediator is recruited to promoters by direct interactions with regulatory proteins and serves as a scaffold for the assembly of a functional preinitiation complex with RNA polymerase II and the general transcription factors. The sequence is that of Mediator of RNA polymerase II transcription subunit 18 (srb5) from Aspergillus oryzae (strain ATCC 42149 / RIB 40) (Yellow koji mold).